The following is a 192-amino-acid chain: Ion-translocating oxidoreductase complex subunit B (192 aa).

The tract at residues 1-26 (MNAIWIAVAAVSLLGLAFGAILGYAS) is hydrophobic. The 60-residue stretch at 32 to 91 (EDDPVVEKIDEILPQSQCGQCGYPGCRPYAEAISCNGEKINRCAPGGEAVMLKIAELLNV) folds into the 4Fe-4S domain. The [4Fe-4S] cluster site is built by C49, C52, C57, C74, C117, C120, C123, C127, C147, C150, C153, and C157. 4Fe-4S ferredoxin-type domains lie at 108–137 (MVAV…GATR) and 138–167 (VMHT…LQPV).

The protein belongs to the 4Fe4S bacterial-type ferredoxin family. RnfB subfamily. In terms of assembly, the complex is composed of six subunits: RsxA, RsxB, RsxC, RsxD, RsxE and RsxG. [4Fe-4S] cluster serves as cofactor.

The protein resides in the cell inner membrane. Part of a membrane-bound complex that couples electron transfer with translocation of ions across the membrane. Required to maintain the reduced state of SoxR. The protein is Ion-translocating oxidoreductase complex subunit B of Shigella boydii serotype 4 (strain Sb227).